The following is a 313-amino-acid chain: Adhesin MafA 2 (313 aa).

The first 14 residues, 1 to 14 (MKTLLLLIPLVLTA), serve as a signal peptide directing secretion. Residue C15 is the site of N-palmitoyl cysteine attachment. The S-diacylglycerol cysteine moiety is linked to residue C15. Over residues 282–297 (GDTTAQNRPDFKQNNG) the composition is skewed to polar residues. The interval 282 to 313 (GDTTAQNRPDFKQNNGKKPDVGNEVIRRRKGG) is disordered.

Belongs to the MafA family.

The protein localises to the cell outer membrane. In Neisseria meningitidis serogroup A / serotype 4A (strain DSM 15465 / Z2491), this protein is Adhesin MafA 2 (mafA2).